Reading from the N-terminus, the 253-residue chain is Small ribosomal subunit protein uS2 (253 aa).

The protein belongs to the universal ribosomal protein uS2 family.

This Hahella chejuensis (strain KCTC 2396) protein is Small ribosomal subunit protein uS2.